A 611-amino-acid polypeptide reads, in one-letter code: ANK repeat-containing protein nipk-1 (611 aa).

Positions 91–149 form a coiled coil; it reads NSKSKKKTENQETKEKDEEAEEKKDGPPKDDKELKMKKEKEQEDENAELDEQKKDGDLL. 3 disordered regions span residues 92 to 167, 212 to 255, and 280 to 333; these read SKSK…SHPY, ISAS…DTSR, and TKEE…LSPR. Basic and acidic residues predominate over residues 97 to 131; the sequence is KTENQETKEKDEEAEEKKDGPPKDDKELKMKKEKE. Composition is skewed to polar residues over residues 212–223, 239–255, and 315–333; these read ISASTTPDTVLS, ESLQSPFSDISSADTSR, and GTCSGPTTPSFNQTRLSPR. ANK repeat units lie at residues 375–405, 417–446, 452–482, 486–527, and 532–561; these read DGDTPLHIVAAHNDLGKIYALCETLRKTMNE, FGETPLYVAVLQRSIEVVEYLLELGASPNS, VGDSPLHFATARGMNNMVEALLSKREIRVNE, DGQT…DPTI, and TGKTIVHHAVDKMDVELLDFLKTVVNEDTF.

It belongs to the iASPP family. As to expression, expressed in the nervous system.

Its function is as follows. Acts downstream of the receptor complex composed of ilcr-1 and ilcr-2, which is a signaling complex that modulates neuronal activity and animal behavior in response to sensory neuron input. Mediates signaling of the complex. The protein is ANK repeat-containing protein nipk-1 of Caenorhabditis elegans.